A 652-amino-acid polypeptide reads, in one-letter code: UvrABC system protein C (652 aa).

In terms of domain architecture, GIY-YIG spans P20–V99. A UVR domain is found at D209–L244.

The protein belongs to the UvrC family. In terms of assembly, interacts with UvrB in an incision complex.

It localises to the cytoplasm. The UvrABC repair system catalyzes the recognition and processing of DNA lesions. UvrC both incises the 5' and 3' sides of the lesion. The N-terminal half is responsible for the 3' incision and the C-terminal half is responsible for the 5' incision. This chain is UvrABC system protein C, found in Parasynechococcus marenigrum (strain WH8102).